A 235-amino-acid polypeptide reads, in one-letter code: Class A basic helix-loop-helix protein 9 (235 aa).

Disordered stretches follow at residues Met1–Ala69 and Gly132–Ser235. Residues Arg55–Arg67 are compositionally biased toward basic residues. In terms of domain architecture, bHLH spans Ala65–Leu117.

Heterodimer. Efficient DNA binding requires dimerization with another bHLH protein. Interacts with TCF3, TCF4, and TCF12.

The protein localises to the nucleus. It is found in the cytoplasm. Functionally, transcription factor, which play a role in limb development. Is an essential player in the regulatory network governing transcription of genes implicated in limb morphogenesis. The chain is Class A basic helix-loop-helix protein 9 (BHLHA9) from Homo sapiens (Human).